The chain runs to 243 residues: 1-(5-phosphoribosyl)-5-[(5-phosphoribosylamino)methylideneamino] imidazole-4-carboxamide isomerase (243 aa).

The active-site Proton acceptor is the Asp-8. Asp-130 serves as the catalytic Proton donor.

The protein belongs to the HisA/HisF family.

The protein resides in the cytoplasm. The enzyme catalyses 1-(5-phospho-beta-D-ribosyl)-5-[(5-phospho-beta-D-ribosylamino)methylideneamino]imidazole-4-carboxamide = 5-[(5-phospho-1-deoxy-D-ribulos-1-ylimino)methylamino]-1-(5-phospho-beta-D-ribosyl)imidazole-4-carboxamide. Its pathway is amino-acid biosynthesis; L-histidine biosynthesis; L-histidine from 5-phospho-alpha-D-ribose 1-diphosphate: step 4/9. This chain is 1-(5-phosphoribosyl)-5-[(5-phosphoribosylamino)methylideneamino] imidazole-4-carboxamide isomerase, found in Ruthia magnifica subsp. Calyptogena magnifica.